Here is a 409-residue protein sequence, read N- to C-terminus: Indian hedgehog protein (409 aa).

The signal sequence occupies residues 1-23 (MQLPKVVLLLCAAALLLSGAVRG). Cys24 carries N-palmitoyl cysteine lipidation. Positions 89, 90, 95, 125, 126, 129, and 131 each coordinate Ca(2+). The Zn(2+) site is built by His140, Asp147, and His182. A lipid anchor (Cholesterol glycine ester) is attached at Gly197.

It belongs to the hedgehog family. In terms of assembly, multimer. Interacts with BOC and CDON. Interacts with PTCH1. Interacts with glypican GPC3. In terms of processing, cholesterylation is required for N-product targeting to lipid rafts and multimerization. Post-translationally, the C-terminal domain displays an autoproteolysis activity and a cholesterol transferase activity. Both activities result in the cleavage of the full-length protein and covalent attachment of a cholesterol moiety to the C-terminal of the newly generated N-product. The N-product is the active species in both local and long-range signaling, whereas the C-product is degraded in the endoplasmic reticulum. N-palmitoylation by HHAT of N-product is required for indian hedgehog protein N-product multimerization and full activity. Expressed in the marginal zone at early gastrulation. At stage 14, expression begins in the neural plate with expression becoming more prominent in the anterodorsal area at neural tube closure. At this stage, also expressed diffusely in the somitic and pre-somitic mesoderm. By the early tadpole (stages 28-30), expression is widespread throughout anterior structures with highest levels in the otic vesicle, the eye, and the branchial arches.

The protein localises to the cell membrane. It is found in the endoplasmic reticulum membrane. Its subcellular location is the golgi apparatus membrane. It localises to the secreted. It catalyses the reaction glycyl-L-cysteinyl-[protein] + cholesterol + H(+) = [protein]-C-terminal glycyl cholesterol ester + N-terminal L-cysteinyl-[protein]. Its function is as follows. Signal involved in the early induction and patterning of anterodorsal ectoderm, nervous system and somites. Induces ectopic cement gland formation in embryos. It is involved in the regulation of endochondral skeleton formation, and the development of retinal pigment epithelium (RPE), photoreceptors and periocular tissues. In terms of biological role, the C-terminal part of the indian hedgehog protein precursor displays an autoproteolysis and a cholesterol transferase activity. Both activities result in the cleavage of the full-length protein into two parts followed by the covalent attachment of a cholesterol moiety to the C-terminal of the newly generated N-product. Both activities occur in the endoplasmic reticulum. The dually lipidated indian hedgehog protein N-product is a morphogen which is essential for a variety of patterning events during development. Binds to the patched (PTCH1) receptor, which functions in association with smoothened (SMO), to activate the transcription of target genes. Signal involved in the early induction and patterning of anterodorsal ectoderm, nervous system and somites. Induces ectopic cement gland formation in embryos. This is Indian hedgehog protein from Xenopus laevis (African clawed frog).